The following is a 464-amino-acid chain: Argininosuccinate lyase (464 aa).

This sequence belongs to the lyase 1 family. Argininosuccinate lyase subfamily.

The protein resides in the cytoplasm. The catalysed reaction is 2-(N(omega)-L-arginino)succinate = fumarate + L-arginine. Its pathway is amino-acid biosynthesis; L-arginine biosynthesis; L-arginine from L-ornithine and carbamoyl phosphate: step 3/3. This chain is Argininosuccinate lyase, found in Pseudomonas entomophila (strain L48).